The chain runs to 114 residues: UPF0212 protein Mbur_0968 (114 aa).

The protein belongs to the UPF0212 family.

This is UPF0212 protein Mbur_0968 from Methanococcoides burtonii (strain DSM 6242 / NBRC 107633 / OCM 468 / ACE-M).